Here is a 173-residue protein sequence, read N- to C-terminus: MTVILGIDPGSRITGYGIVRQEGCKLTYLGSGCIRTKVDDLPARLKLIYAGVSEIITQFQPDCLAIEQVFMAKNADSALKLGQARGVAIVVAMNLDLPVFEYAARQVKQTVVGSGAAEKSQVQHMVRTLLKLPANPQADAADALAIAITHCHVSQNALRMGSGGLNLARGRLR.

Residues Asp-8, Glu-67, and Asp-139 contribute to the active site. Mg(2+)-binding residues include Asp-8, Glu-67, and Asp-139.

It belongs to the RuvC family. As to quaternary structure, homodimer which binds Holliday junction (HJ) DNA. The HJ becomes 2-fold symmetrical on binding to RuvC with unstacked arms; it has a different conformation from HJ DNA in complex with RuvA. In the full resolvosome a probable DNA-RuvA(4)-RuvB(12)-RuvC(2) complex forms which resolves the HJ. Mg(2+) is required as a cofactor.

It localises to the cytoplasm. It catalyses the reaction Endonucleolytic cleavage at a junction such as a reciprocal single-stranded crossover between two homologous DNA duplexes (Holliday junction).. Its function is as follows. The RuvA-RuvB-RuvC complex processes Holliday junction (HJ) DNA during genetic recombination and DNA repair. Endonuclease that resolves HJ intermediates. Cleaves cruciform DNA by making single-stranded nicks across the HJ at symmetrical positions within the homologous arms, yielding a 5'-phosphate and a 3'-hydroxyl group; requires a central core of homology in the junction. The consensus cleavage sequence is 5'-(A/T)TT(C/G)-3'. Cleavage occurs on the 3'-side of the TT dinucleotide at the point of strand exchange. HJ branch migration catalyzed by RuvA-RuvB allows RuvC to scan DNA until it finds its consensus sequence, where it cleaves and resolves the cruciform DNA. This Sodalis glossinidius (strain morsitans) protein is Crossover junction endodeoxyribonuclease RuvC.